Consider the following 556-residue polypeptide: Urocanate hydratase (556 aa).

NAD(+) contacts are provided by residues 52–53 (GG), Q130, 176–178 (GMG), E196, R201, 242–243 (NA), 263–267 (QTSAH), 273–274 (YL), and Y322. C410 is an active-site residue. Residue G492 coordinates NAD(+).

Belongs to the urocanase family. It depends on NAD(+) as a cofactor.

The protein localises to the cytoplasm. The catalysed reaction is 4-imidazolone-5-propanoate = trans-urocanate + H2O. It functions in the pathway amino-acid degradation; L-histidine degradation into L-glutamate; N-formimidoyl-L-glutamate from L-histidine: step 2/3. Its function is as follows. Catalyzes the conversion of urocanate to 4-imidazolone-5-propionate. This chain is Urocanate hydratase, found in Bradyrhizobium sp. (strain BTAi1 / ATCC BAA-1182).